A 367-amino-acid polypeptide reads, in one-letter code: Endophilin-A2 (367 aa).

A membrane-binding amphipathic helix region spans residues M1–V21. Residues S18–S249 enclose the BAR domain. The tract at residues P60–P87 is required for dimerization upon membrane association. Positions E181–R250 form a coiled coil. Residues L218–E254 are interaction with ARC. The segment at R243 to K293 is disordered. Positions R245–Y263 are enriched in basic and acidic residues. Residues S268–F289 show a composition bias toward polar residues. The SH3 domain occupies L305–P364.

The protein belongs to the endophilin family. Interacts with ARC. Interacts with SYNJ1 and DNM1. As to expression, highest level in central region of the theca of developing follicles (at protein level). Expressed at highest level in brain and testis, at high level in kidney, lung and stroma, low level in spleen and adrenal gland (at protein level). Expressed in most tissue with highest levels in small ovarian follicles, brain and testis.

It localises to the cytoplasm. The protein resides in the early endosome membrane. Its subcellular location is the cell projection. The protein localises to the podosome. Its function is as follows. Implicated in endocytosis. May recruit other proteins to membranes with high curvature. This is Endophilin-A2 from Gallus gallus (Chicken).